The primary structure comprises 402 residues: Chorismate synthase (402 aa).

R40 and R46 together coordinate NADP(+). FMN contacts are provided by residues 134 to 136 (RAS), 255 to 256 (QA), G299, 314 to 318 (KPIAT), and R340.

Belongs to the chorismate synthase family. As to quaternary structure, homotetramer. FMNH2 is required as a cofactor.

The catalysed reaction is 5-O-(1-carboxyvinyl)-3-phosphoshikimate = chorismate + phosphate. It functions in the pathway metabolic intermediate biosynthesis; chorismate biosynthesis; chorismate from D-erythrose 4-phosphate and phosphoenolpyruvate: step 7/7. Catalyzes the anti-1,4-elimination of the C-3 phosphate and the C-6 proR hydrogen from 5-enolpyruvylshikimate-3-phosphate (EPSP) to yield chorismate, which is the branch point compound that serves as the starting substrate for the three terminal pathways of aromatic amino acid biosynthesis. This reaction introduces a second double bond into the aromatic ring system. This Leifsonia xyli subsp. xyli (strain CTCB07) protein is Chorismate synthase.